Here is a 264-residue protein sequence, read N- to C-terminus: Hydroxyethylthiazole kinase (264 aa).

Methionine 55 provides a ligand contact to substrate. The ATP site is built by arginine 130 and serine 176. Residue glycine 203 coordinates substrate.

It belongs to the Thz kinase family. Requires Mg(2+) as cofactor.

The enzyme catalyses 5-(2-hydroxyethyl)-4-methylthiazole + ATP = 4-methyl-5-(2-phosphooxyethyl)-thiazole + ADP + H(+). It functions in the pathway cofactor biosynthesis; thiamine diphosphate biosynthesis; 4-methyl-5-(2-phosphoethyl)-thiazole from 5-(2-hydroxyethyl)-4-methylthiazole: step 1/1. In terms of biological role, catalyzes the phosphorylation of the hydroxyl group of 4-methyl-5-beta-hydroxyethylthiazole (THZ). The protein is Hydroxyethylthiazole kinase of Leptospira borgpetersenii serovar Hardjo-bovis (strain JB197).